We begin with the raw amino-acid sequence, 94 residues long: Pyrimidine/purine nucleoside phosphorylase (94 aa).

This sequence belongs to the nucleoside phosphorylase PpnP family.

The enzyme catalyses a purine D-ribonucleoside + phosphate = a purine nucleobase + alpha-D-ribose 1-phosphate. It carries out the reaction adenosine + phosphate = alpha-D-ribose 1-phosphate + adenine. It catalyses the reaction cytidine + phosphate = cytosine + alpha-D-ribose 1-phosphate. The catalysed reaction is guanosine + phosphate = alpha-D-ribose 1-phosphate + guanine. The enzyme catalyses inosine + phosphate = alpha-D-ribose 1-phosphate + hypoxanthine. It carries out the reaction thymidine + phosphate = 2-deoxy-alpha-D-ribose 1-phosphate + thymine. It catalyses the reaction uridine + phosphate = alpha-D-ribose 1-phosphate + uracil. The catalysed reaction is xanthosine + phosphate = alpha-D-ribose 1-phosphate + xanthine. Its function is as follows. Catalyzes the phosphorolysis of diverse nucleosides, yielding D-ribose 1-phosphate and the respective free bases. Can use uridine, adenosine, guanosine, cytidine, thymidine, inosine and xanthosine as substrates. Also catalyzes the reverse reactions. This Aeromonas salmonicida (strain A449) protein is Pyrimidine/purine nucleoside phosphorylase.